A 101-amino-acid chain; its full sequence is Small ribosomal subunit protein bS18c (101 aa).

Basic residues predominate over residues 1-19; the sequence is MDKSKRPFRKSKRSFRKRL. The segment at 1–23 is disordered; it reads MDKSKRPFRKSKRSFRKRLPPIG.

Belongs to the bacterial ribosomal protein bS18 family. As to quaternary structure, part of the 30S ribosomal subunit.

The protein resides in the plastid. It localises to the chloroplast. The sequence is that of Small ribosomal subunit protein bS18c from Chloranthus spicatus (Chulantree).